A 513-amino-acid polypeptide reads, in one-letter code: Cytochrome P450 71D445 (513 aa).

Residues 12–28 traverse the membrane as a helical; Signal-anchor for type II membrane protein segment; it reads SEWAITSTITLLFLILL. A heme-binding site is contributed by Cys450.

Belongs to the cytochrome P450 family. The cofactor is heme. In terms of tissue distribution, expressed in mature seeds.

It localises to the membrane. It catalyses the reaction (-)-casbene + reduced [NADPH--hemoprotein reductase] + O2 = 8-hydroxycasbene + oxidized [NADPH--hemoprotein reductase] + H2O + H(+). The catalysed reaction is 4-hydroxycasbene + reduced [NADPH--hemoprotein reductase] + O2 = 4,8-dihydroxycasbene + oxidized [NADPH--hemoprotein reductase] + H2O + H(+). The enzyme catalyses 4,8-dihydroxycasbene + reduced [NADPH--hemoprotein reductase] + O2 = 4,5,8-trihydroxycasbene + oxidized [NADPH--hemoprotein reductase] + H2O + H(+). The protein operates within secondary metabolite biosynthesis; terpenoid biosynthesis. Its function is as follows. Involved in the biosynthesis of macrocyclic lathyrane type diterpenoids (also called Euphorbia factors) natural products, including the cyclization route from casbene to jolkinol C, a precursor for ingenol mebutate that is used to treat actinic keratosis, a precancerous skin condition. Catalyzes the hydroxylation of (-)-casbene and 4-hydroxycasbene to produce 8-hydroxycasbene and 4,8-dihydroxycasbene, respectively. Also mediates the formation of 4-hydroxy-8-ketocasbene from 4,8-dihydroxycasbene. Together with ADH1, triggers the biosynthesis of 8-ketocasbene from 8-hydroxycasbene. The protein is Cytochrome P450 71D445 of Euphorbia lathyris (Caper spurge).